A 259-amino-acid polypeptide reads, in one-letter code: Malonyl-[acyl-carrier protein] O-methyltransferase 2 (259 aa).

It belongs to the methyltransferase superfamily.

The catalysed reaction is malonyl-[ACP] + S-adenosyl-L-methionine = malonyl-[ACP] methyl ester + S-adenosyl-L-homocysteine. The protein operates within cofactor biosynthesis; biotin biosynthesis. Functionally, converts the free carboxyl group of a malonyl-thioester to its methyl ester by transfer of a methyl group from S-adenosyl-L-methionine (SAM). It allows to synthesize pimeloyl-ACP via the fatty acid synthetic pathway. This is Malonyl-[acyl-carrier protein] O-methyltransferase 2 from Ilyobacter polytropus (strain ATCC 51220 / DSM 2926 / LMG 16218 / CuHBu1).